Here is a 179-residue protein sequence, read N- to C-terminus: Probable splicing factor, arginine/serine-rich 6 (179 aa).

The RRM domain maps to 3 to 76; the sequence is AKVYVGGLPS…VRARVELSTG (74 aa). Positions 75–179 are disordered; it reads TGQRRGGGGR…RSRSRSASPH (105 aa). Residues 78-93 show a composition bias toward gly residues; the sequence is RRGGGGRGGGFGGRGG. Residues 94-160 are compositionally biased toward basic and acidic residues; sequence GGRDRSPYRG…RSPQERDRSH (67 aa). Over residues 161 to 173 the composition is skewed to basic residues; the sequence is SKSRSRSRSRSRS.

This sequence belongs to the splicing factor SR family. Extensively phosphorylated on serine residues in the RS domain.

The protein resides in the nucleus. Plays a functionally redundant role in shifting germ cell sexual differentiation in hermaprodites. Required for the development of somatic gonad structures and for progression from larval stage to adulthood. The polypeptide is Probable splicing factor, arginine/serine-rich 6 (rsp-6) (Caenorhabditis elegans).